We begin with the raw amino-acid sequence, 468 residues long: MSSGKVVQVIGPVVDVQFPLSESLPDIDDALKVKREDGTELVIEVALELGDGIMRTVAMDSTDGLKRGAEVEGTGASISVPVGKDTLGRVFNVLGNTIDNGPEFDEDHPRNPIHRDAPKYDQLSTGIEILETGIKVIDLLAPYIKGGKIGLFGGAGVGKTVLIQELIHNIAQEHNGISVFTGVGERTREGNDLYFEMKESGVLEKTAMVFGQMNEPPGARMRVALTGLTLAEYFRDVEGQDVLLFIDNIFRFTQAGSEVSALLGRIPSAVGYQPTLATEMGQLQERITSTKKGSVTSIQAVYVPADDYTDPAPATTFAHLDATTNLERSLTQQGIYPAVDPLASTSSALTPEIVGEEHYEVATEVQHVLQRYRELQDIISILGMDELSDEEKIIVARARRIQFFLSQNFHVAEQFTGNPGSYVPVEETVKGFKEILEGKYDNLPEEAFRLVGGIEDVVEKAKKLAGNN.

Residue 153–160 (GGAGVGKT) participates in ATP binding.

It belongs to the ATPase alpha/beta chains family. In terms of assembly, F-type ATPases have 2 components, CF(1) - the catalytic core - and CF(0) - the membrane proton channel. CF(1) has five subunits: alpha(3), beta(3), gamma(1), delta(1), epsilon(1). CF(0) has three main subunits: a(1), b(2) and c(9-12). The alpha and beta chains form an alternating ring which encloses part of the gamma chain. CF(1) is attached to CF(0) by a central stalk formed by the gamma and epsilon chains, while a peripheral stalk is formed by the delta and b chains.

The protein localises to the cell membrane. The enzyme catalyses ATP + H2O + 4 H(+)(in) = ADP + phosphate + 5 H(+)(out). In terms of biological role, produces ATP from ADP in the presence of a proton gradient across the membrane. The catalytic sites are hosted primarily by the beta subunits. The protein is ATP synthase subunit beta of Ligilactobacillus salivarius (strain UCC118) (Lactobacillus salivarius).